A 523-amino-acid chain; its full sequence is Xanthotoxin 5-hydroxylase CYP82C2 (523 aa).

Residues 1–21 (MDTSLFSLFVPILVFVFIALF) form a helical membrane-spanning segment. Residue cysteine 462 coordinates heme.

It belongs to the cytochrome P450 family. Heme is required as a cofactor.

The protein resides in the membrane. It carries out the reaction xanthotoxin + reduced [NADPH--hemoprotein reductase] + O2 = 5-hydroxyxanthotoxin + oxidized [NADPH--hemoprotein reductase] + H2O + 2 H(+). The enzyme catalyses indole-3-carbonyl nitrile + reduced [NADPH--hemoprotein reductase] + O2 = 4-hydroxy-indole-3-carbonyl nitrile + oxidized [NADPH--hemoprotein reductase] + H2O + H(+). Involved in the biosynthetic pathway to 4-hydroxyindole-3-carbonyl nitrile (4-OH-ICN), a cyanogenic metabolite required for inducible pathogen defense. Converts indole-3-carbonyl nitrile (ICN) into 4-OH-ICN. Can hydroxylate xanthotoxin (8-methoxypsoralen) to form 5-hydroxyxanthotoxin (5-hydroxy-8-methoxypsoralen) in vivo and in vitro. This chain is Xanthotoxin 5-hydroxylase CYP82C2, found in Arabidopsis thaliana (Mouse-ear cress).